A 139-amino-acid chain; its full sequence is Putative pre-16S rRNA nuclease (139 aa).

It belongs to the YqgF nuclease family.

It is found in the cytoplasm. Functionally, could be a nuclease involved in processing of the 5'-end of pre-16S rRNA. The polypeptide is Putative pre-16S rRNA nuclease (Haemophilus influenzae (strain PittEE)).